The sequence spans 166 residues: Probable DHNTP pyrophosphohydrolase (166 aa).

Residues 42-166 (DLQLSASALV…FKKYYRYKNI (125 aa)) form the Nudix hydrolase domain. A Nudix box motif is present at residues 73 to 94 (GHVELKESPLDTAIREFHEETG). The Mg(2+) site is built by Glu88 and Glu92.

This sequence belongs to the Nudix hydrolase family. As to quaternary structure, monomer. Mg(2+) is required as a cofactor.

It functions in the pathway cofactor biosynthesis; tetrahydrofolate biosynthesis; 2-amino-4-hydroxy-6-hydroxymethyl-7,8-dihydropteridine diphosphate from 7,8-dihydroneopterin triphosphate: step 1/4. Functionally, probably mediates the removal of pyrophosphate from dihydroneopterin triphosphate (DHNTP), a possible step in the pterin branch of the folate synthesis pathway. The chain is Probable DHNTP pyrophosphohydrolase (folQ) from Lactococcus lactis subsp. cremoris (strain MG1363).